The chain runs to 77 residues: Conotoxin CaHr91 (77 aa).

A signal peptide spans 1 to 19 (MKLTCALIITVLFLSITAD). Residues 20–43 (DSRGKQGYRALKSIAGMLNSKTVR) constitute a propeptide that is removed on maturation. Intrachain disulfides connect Cys-45–Cys-60, Cys-52–Cys-65, and Cys-59–Cys-74.

Belongs to the conotoxin O1 superfamily. Expressed by the venom duct.

It is found in the secreted. The polypeptide is Conotoxin CaHr91 (Conus capitaneus (Captain cone)).